The primary structure comprises 189 residues: Xanthine phosphoribosyltransferase (189 aa).

Positions 20 and 27 each coordinate xanthine. 128–132 is a 5-phospho-alpha-D-ribose 1-diphosphate binding site; it reads ANGEA. Lys-156 serves as a coordination point for xanthine.

This sequence belongs to the purine/pyrimidine phosphoribosyltransferase family. Xpt subfamily. Homodimer.

The protein localises to the cytoplasm. It carries out the reaction XMP + diphosphate = xanthine + 5-phospho-alpha-D-ribose 1-diphosphate. It participates in purine metabolism; XMP biosynthesis via salvage pathway; XMP from xanthine: step 1/1. Converts the preformed base xanthine, a product of nucleic acid breakdown, to xanthosine 5'-monophosphate (XMP), so it can be reused for RNA or DNA synthesis. In Clostridium acetobutylicum (strain ATCC 824 / DSM 792 / JCM 1419 / IAM 19013 / LMG 5710 / NBRC 13948 / NRRL B-527 / VKM B-1787 / 2291 / W), this protein is Xanthine phosphoribosyltransferase.